Consider the following 609-residue polypeptide: Sterol O-acyltransferase 2 (609 aa).

The segment covering 1 to 15 has biased composition (polar residues); it reads MGRTNTSDQLNAISD. The tract at residues 1–41 is disordered; it reads MGRTNTSDQLNAISDKNTKRKSLALDNEYHNNSSSEDDSSK. The next 6 membrane-spanning stretches (helical) occupy residues 152–172, 195–215, 229–249, 253–273, 402–422, and 451–471; these read FFGM…NNLI, LFKV…AFFV, VGWW…LWIA, CLDF…VFIM, WSYV…MILI, and FLLM…FFLI. Residues 490 to 496 carry the FYXDWWN motif motif; sequence FYGPWWS. 2 consecutive transmembrane segments (helical) span residues 534–554 and 589–609; these read AAII…YVIF and IICW…YLVF. The active site involves histidine 546.

It belongs to the membrane-bound acyltransferase family. Sterol o-acyltransferase subfamily.

Its subcellular location is the endoplasmic reticulum membrane. Its activity is regulated as follows. Inhibited by the protoberberine derivative HWY-289 in a non-competitive manner. Inhibited by miconazole. Not inhibited by CI-976, polyoxin D, amphotericin B or nikkomycin Z. In terms of biological role, sterol O-acyltransferase that catalyzes the formation of stery esters. This is Sterol O-acyltransferase 2 from Candida albicans (Yeast).